The chain runs to 156 residues: MPRRRVIGQRKILPDPKFGSELLAKFVNILMVDGKKSTAETIVYSALETLAQRSGKTELEAFEVALENVRPTVEVKSRRVGGSTYQVPVEVRPVRRNALAMRWIVEAARKRGDKSMALRLANELTDAADNKGTAVKKREDVHRMAEANKAFAHYRW.

Belongs to the universal ribosomal protein uS7 family. In terms of assembly, part of the 30S ribosomal subunit. Contacts proteins S9 and S11.

Its function is as follows. One of the primary rRNA binding proteins, it binds directly to 16S rRNA where it nucleates assembly of the head domain of the 30S subunit. Is located at the subunit interface close to the decoding center, probably blocks exit of the E-site tRNA. The protein is Small ribosomal subunit protein uS7 of Klebsiella pneumoniae subsp. pneumoniae (strain ATCC 700721 / MGH 78578).